The sequence spans 141 residues: Large ribosomal subunit protein uL11 (141 aa).

This sequence belongs to the universal ribosomal protein uL11 family. In terms of assembly, part of the ribosomal stalk of the 50S ribosomal subunit. Interacts with L10 and the large rRNA to form the base of the stalk. L10 forms an elongated spine to which L12 dimers bind in a sequential fashion forming a multimeric L10(L12)X complex. One or more lysine residues are methylated.

In terms of biological role, forms part of the ribosomal stalk which helps the ribosome interact with GTP-bound translation factors. This chain is Large ribosomal subunit protein uL11, found in Prochlorococcus marinus (strain MIT 9215).